The following is a 74-amino-acid chain: Protein WFDC9 (74 aa).

An N-terminal signal peptide occupies residues 1 to 19 (MKFWILLLTVSAHGIVVFL).

The protein localises to the secreted. The sequence is that of Protein WFDC9 (Wfdc9) from Rattus norvegicus (Rat).